Consider the following 757-residue polypeptide: Lysyl oxidase homolog 4 (757 aa).

Residues 1-25 (MMWPQPPTFSLFLLLLLSQAPSSRP) form the signal peptide. SRCR domains follow at residues 33–134 (LRLV…VVCH), 160–288 (VRLK…VSCV), 312–412 (VRLR…VRCN), and 422–530 (VRLA…VACM). 17 disulfide bridges follow: C59/C123, C72/C133, C103/C113, C192/C277, C205/C287, C252/C262, C337/C401, C350/C411, C381/C391, C451/C516, C464/C529, C498/C508, C559/C565, C611/C659, C643/C649, C671/C681, and C718/C732. N-linked (GlcNAc...) asparagine glycosylation is present at N199. The lysyl-oxidase like stretch occupies residues 534 to 737 (PDLVMNAQLV…WLHNCHTGDS (204 aa)). Cu cation contacts are provided by H612, H614, and H616. An N-linked (GlcNAc...) asparagine glycan is attached at N630. The segment at residues 639-675 (KASFCLEDTNCPSGVQRRYACANFGEQGVAVGCWDTY) is a cross-link (lysine tyrosylquinone (Lys-Tyr)). Y675 is subject to 2',4',5'-topaquinone.

It belongs to the lysyl oxidase family. It depends on Cu cation as a cofactor. Requires lysine tyrosylquinone residue as cofactor. Post-translationally, the lysine tyrosylquinone cross-link (LTQ) is generated by condensation of the epsilon-amino group of a lysine with a topaquinone produced by oxidation of tyrosine. In terms of processing, may be proteolytically cleaved by BMP1.

The protein localises to the secreted. The protein resides in the extracellular space. The enzyme catalyses L-lysyl-[protein] + O2 + H2O = (S)-2-amino-6-oxohexanoyl-[protein] + H2O2 + NH4(+). Its function is as follows. Catalyzes the oxidative deamination of lysine and hydroxylysine residues in collagen and elastin, resulting in the formation of covalent cross-linkages, and the stabilization of collagen and elastin fibers. The sequence is that of Lysyl oxidase homolog 4 (Loxl4) from Mus musculus (Mouse).